We begin with the raw amino-acid sequence, 200 residues long: ATP synthase subunit s, mitochondrial (200 aa).

Residues 1 to 25 (MMLFGKISQQLCGLKKLPWSRDSRY) constitute a mitochondrion transit peptide. The tract at residues 1–61 (MMLFGKISQQ…SEWLLRCGAM (61 aa)) is N-terminal domain. G59 provides a ligand contact to Mg(2+). LRR repeat units lie at residues 62 to 87 (VRYH…KYKI), 88 to 116 (QAID…KIRL), 117 to 141 (CKCH…KSML), and 142 to 173 (EMEI…LSDL). T93 is a binding site for Mg(2+).

Belongs to the ATP synthase subunit s family. Homotetramer. Associates with ATP synthase.

The protein resides in the mitochondrion. It is found in the mitochondrion inner membrane. Involved in regulation of mitochondrial membrane ATP synthase. Necessary for H(+) conduction of ATP synthase. Facilitates energy-driven catalysis of ATP synthesis by blocking a proton leak through an alternative proton exit pathway. This chain is ATP synthase subunit s, mitochondrial (DMAC2L), found in Bos taurus (Bovine).